Reading from the N-terminus, the 663-residue chain is Inner nuclear membrane protein HEH2 (663 aa).

Disordered regions lie at residues 46–188 (QRLQ…ELPN) and 267–289 (ISETFDNQDEEDTSRLSSKKNIR). Residues 47–62 (RLQSSPEASKVRTSIQ) show a composition bias toward polar residues. Basic and acidic residues predominate over residues 91 to 123 (KTVKDENVETNKRKREQISTDNEAKMQIQEEKS). Ser-123 carries the phosphoserine modification. A compositionally biased stretch (basic residues) spans 124-134 (PKKKRKKRSSK). The short motif at 124-137 (PKKKRKKRSSKANK) is the Nuclear localization signal element. Residues 164 to 183 (EELHKKDSSDDKPRVKELPK) show a composition bias toward basic and acidic residues. The helical transmembrane segment at 317–337 (LFIWLWNGAIFLSIICPILFG) threads the bilayer.

In terms of assembly, interacts with SRP1.

It is found in the nucleus inner membrane. The polypeptide is Inner nuclear membrane protein HEH2 (HEH2) (Saccharomyces cerevisiae (strain ATCC 204508 / S288c) (Baker's yeast)).